The sequence spans 231 residues: Protein HHL1, chloroplastic (231 aa).

The N-terminal 39 residues, 1–39 (MEVSMSLNALTRLPLKNTGRFEEVGLARHSLFSSRTACR), are a transit peptide targeting the chloroplast. The chain crosses the membrane as a helical span at residues 93 to 113 (YLWYPLSIIAGGTTAKIMVAA). A disordered region spans residues 206 to 231 (SFGKLSSLNPGSDEKTEETSDEKAKA). A compositionally biased stretch (basic and acidic residues) spans 217-231 (SDEKTEETSDEKAKA).

As to quaternary structure, interacts with psbB, psbC and LQY1, but not with psbA or psbD.

Its subcellular location is the plastid. It localises to the chloroplast thylakoid membrane. In terms of biological role, involved in photoprotection. Forms a complex with LQY1 that is involved in the repair and reassembly cycle of the PSII-LHCII supercomplex under high-light conditions. May function in guiding the release of psbC from PSII core monomers. The polypeptide is Protein HHL1, chloroplastic (Arabidopsis thaliana (Mouse-ear cress)).